Consider the following 242-residue polypeptide: DNA repair protein RecO (242 aa).

It belongs to the RecO family. Monomer.

Functionally, involved in DNA repair and RecF pathway recombination. This is DNA repair protein RecO from Shigella flexneri.